Reading from the N-terminus, the 275-residue chain is MGIRKVKPTSPGRRFQEYSTFEEITADRPSEKGLIEPLRKTGGRNVNGRITCRHRGGGHKRHYRVIDFKRNKDDIPAKVAAIEYDPNRSARIALLFYADGEKRYILAPVNLKVGDTVMSGQASEIKPGNAMPLASIPLGTEVHNIELRLGKGGQIVRSAGGYAKVMAKEARYVLLRLPSSEMRKVLATCKATIGRVGNVEHDDVSIGKAGRNRWLGKRPRVRGVAMNPVDHPMGGGEGKSSGGRHPCSPWGQQSKGVRTRNNKRTDQFIVKRRSK.

Positions 221–275 (VRGVAMNPVDHPMGGGEGKSSGGRHPCSPWGQQSKGVRTRNNKRTDQFIVKRRSK) are disordered.

This sequence belongs to the universal ribosomal protein uL2 family. As to quaternary structure, part of the 50S ribosomal subunit. Forms a bridge to the 30S subunit in the 70S ribosome.

Functionally, one of the primary rRNA binding proteins. Required for association of the 30S and 50S subunits to form the 70S ribosome, for tRNA binding and peptide bond formation. It has been suggested to have peptidyltransferase activity; this is somewhat controversial. Makes several contacts with the 16S rRNA in the 70S ribosome. The sequence is that of Large ribosomal subunit protein uL2 from Desulfosudis oleivorans (strain DSM 6200 / JCM 39069 / Hxd3) (Desulfococcus oleovorans).